The following is an 86-amino-acid chain: Cyclin-dependent kinase inhibitor 6 (86 aa).

Over residues 1–15 (MAAAAATVTAVQPAA) the composition is skewed to low complexity. Positions 1–23 (MAAAAATVTAVQPAASSCGKRDG) are disordered.

It belongs to the CDI family. ICK/KRP subfamily.

This Oryza sativa subsp. japonica (Rice) protein is Cyclin-dependent kinase inhibitor 6 (KRP6).